Here is a 467-residue protein sequence, read N- to C-terminus: Venom prothrombin activator omicarin-C catalytic subunit (467 aa).

An N-terminal signal peptide occupies residues 1-20 (MAPQLLLCLILTFLWSLPEA). A propeptide spanning residues 21–40 (ESNVFLKSKVANRFLQRTKR) is cleaved from the precursor. The 46-residue stretch at 41 to 86 (ANSLFEEFRSGNIERECIEERCSKEEAREVFEDDEKTETFWNVYVD) folds into the Gla domain. 11 positions are modified to 4-carboxyglutamate: Glu-46, Glu-47, Glu-54, Glu-56, Glu-59, Glu-60, Glu-65, Glu-66, Glu-69, Glu-72, and Glu-75. Cys-57 and Cys-62 form a disulfide bridge. Positions 86-122 (DGDQCSSNPCHYRGTCKDGIGSYTCTCLFGYEGKNCE) constitute an EGF-like 1; calcium-binding domain. Disulfide bonds link Cys-90–Cys-101, Cys-95–Cys-110, Cys-112–Cys-121, Cys-129–Cys-140, Cys-136–Cys-149, Cys-151–Cys-164, Cys-172–Cys-329, Cys-216–Cys-221, Cys-236–Cys-252, Cys-377–Cys-391, and Cys-402–Cys-430. Ser-92 is a glycosylation site (O-linked (Hex...) serine). Residues 129–164 (CRVDNGNCWHFCKPVQNDIQCSCAEGYLLGEDGHSC) form the EGF-like 2 domain. A propeptide spans 182 to 209 (REASLPDFVQSQNATLLKKSDNPSPDIR) (activation peptide). The region spanning 210 to 454 (IVNGMDCKLG…FILWIKRIMR (245 aa)) is the Peptidase S1 domain. His-251 (charge relay system) is an active-site residue. An N-linked (GlcNAc...) asparagine glycan is attached at Asn-254. Asp-309 acts as the Charge relay system in catalysis. The active-site Charge relay system is Ser-406.

It belongs to the peptidase S1 family. Snake venom subfamily. Heterodimer of a light and a heavy chains; disulfide-linked. Is associated with omicarin-C non-catalytic subunit (AC Q58L90) in a non-covalent manner. In terms of processing, gamma-carboxyglutamate residues are formed by vitamin K dependent carboxylation. These residues are essential for the binding of calcium. As to expression, expressed by the venom gland.

It is found in the secreted. The catalysed reaction is Selective cleavage of Arg-|-Thr and then Arg-|-Ile bonds in prothrombin to form thrombin.. With respect to regulation, activated by calcium and negatively charged phospholipids. Snake prothrombin activator that attacks the hemostatic system of prey. This catalytic subunit is functionally similar to blood coagulation factor Xa. It requires a non-catalytic subunit present in the venom, which is similar to coagulation factor Va, to be fully active. This is Venom prothrombin activator omicarin-C catalytic subunit from Oxyuranus microlepidotus (Inland taipan).